Reading from the N-terminus, the 293-residue chain is Elongation factor Ts (293 aa).

The interval 80–83 (TDFV) is involved in Mg(2+) ion dislocation from EF-Tu.

It belongs to the EF-Ts family.

It is found in the cytoplasm. Its function is as follows. Associates with the EF-Tu.GDP complex and induces the exchange of GDP to GTP. It remains bound to the aminoacyl-tRNA.EF-Tu.GTP complex up to the GTP hydrolysis stage on the ribosome. This chain is Elongation factor Ts, found in Paraburkholderia phymatum (strain DSM 17167 / CIP 108236 / LMG 21445 / STM815) (Burkholderia phymatum).